Here is a 115-residue protein sequence, read N- to C-terminus: Small ribosomal subunit protein uS14m (115 aa).

The protein belongs to the universal ribosomal protein uS14 family. Component of the mitochondrial small ribosomal subunit (mt-SSU). Mature yeast 74S mitochondrial ribosomes consist of a small (37S) and a large (54S) subunit. The 37S small subunit contains a 15S ribosomal RNA (15S mt-rRNA) and 34 different proteins. The 54S large subunit contains a 21S rRNA (21S mt-rRNA) and 46 different proteins.

It is found in the mitochondrion. In terms of biological role, component of the mitochondrial ribosome (mitoribosome), a dedicated translation machinery responsible for the synthesis of mitochondrial genome-encoded proteins, including at least some of the essential transmembrane subunits of the mitochondrial respiratory chain. The mitoribosomes are attached to the mitochondrial inner membrane and translation products are cotranslationally integrated into the membrane. The polypeptide is Small ribosomal subunit protein uS14m (MRP2) (Saccharomyces cerevisiae (strain ATCC 204508 / S288c) (Baker's yeast)).